A 184-amino-acid chain; its full sequence is Ribosome-recycling factor (184 aa).

This sequence belongs to the RRF family.

It localises to the cytoplasm. Responsible for the release of ribosomes from messenger RNA at the termination of protein biosynthesis. May increase the efficiency of translation by recycling ribosomes from one round of translation to another. The chain is Ribosome-recycling factor from Caldicellulosiruptor saccharolyticus (strain ATCC 43494 / DSM 8903 / Tp8T 6331).